Here is a 161-residue protein sequence, read N- to C-terminus: Transcription antitermination protein NusB (161 aa).

This sequence belongs to the NusB family.

In terms of biological role, involved in transcription antitermination. Required for transcription of ribosomal RNA (rRNA) genes. Binds specifically to the boxA antiterminator sequence of the ribosomal RNA (rrn) operons. The protein is Transcription antitermination protein NusB of Syntrophus aciditrophicus (strain SB).